The following is a 197-amino-acid chain: MQKVVLATGNPGKVRELAQLLADFGLDIVAQTELGVDSAEETGLTFIENAILKARHAAQVTGLPAIADDSGLSVDILGGAPGIYSARYAGENATDQQNLEKLLDTMKDIPDDQRQAQFNCVLVYIRHAEDPTPLVFHGRWPGFIAHKSAGNGGFGYDPIFYIPELGCTAAELTGEQKNAVSHRGQALKMMLDTLRNA.

Substrate is bound at residue 8–13 (TGNPGK). Mg(2+)-binding residues include Glu40 and Asp69. Asp69 (proton acceptor) is an active-site residue. Residues Ser70, 154–157 (FGYD), Lys177, and 182–183 (HR) each bind substrate.

The protein belongs to the HAM1 NTPase family. Homodimer. It depends on Mg(2+) as a cofactor.

It carries out the reaction XTP + H2O = XMP + diphosphate + H(+). The enzyme catalyses dITP + H2O = dIMP + diphosphate + H(+). The catalysed reaction is ITP + H2O = IMP + diphosphate + H(+). Its function is as follows. Pyrophosphatase that catalyzes the hydrolysis of nucleoside triphosphates to their monophosphate derivatives, with a high preference for the non-canonical purine nucleotides XTP (xanthosine triphosphate), dITP (deoxyinosine triphosphate) and ITP. Seems to function as a house-cleaning enzyme that removes non-canonical purine nucleotides from the nucleotide pool, thus preventing their incorporation into DNA/RNA and avoiding chromosomal lesions. This chain is dITP/XTP pyrophosphatase, found in Photorhabdus laumondii subsp. laumondii (strain DSM 15139 / CIP 105565 / TT01) (Photorhabdus luminescens subsp. laumondii).